A 226-amino-acid chain; its full sequence is Cytidylate kinase (226 aa).

Residue 9-17 (GPAGAGKST) participates in ATP binding.

This sequence belongs to the cytidylate kinase family. Type 1 subfamily.

The protein resides in the cytoplasm. The enzyme catalyses CMP + ATP = CDP + ADP. The catalysed reaction is dCMP + ATP = dCDP + ADP. In Clostridium tetani (strain Massachusetts / E88), this protein is Cytidylate kinase.